The chain runs to 406 residues: Cysteine desulfurase IscS (406 aa).

Residues 75-76, Asn-155, Gln-183, and 203-205 each bind pyridoxal 5'-phosphate; these read AT and SSH. At Lys-206 the chain carries N6-(pyridoxal phosphate)lysine. A pyridoxal 5'-phosphate-binding site is contributed by Thr-243. Cys-330 acts as the Cysteine persulfide intermediate in catalysis. Residue Cys-330 participates in [2Fe-2S] cluster binding.

The protein belongs to the class-V pyridoxal-phosphate-dependent aminotransferase family. NifS/IscS subfamily. As to quaternary structure, homodimer. Forms a heterotetramer with IscU, interacts with other sulfur acceptors. Pyridoxal 5'-phosphate serves as cofactor.

Its subcellular location is the cytoplasm. It catalyses the reaction (sulfur carrier)-H + L-cysteine = (sulfur carrier)-SH + L-alanine. The protein operates within cofactor biosynthesis; iron-sulfur cluster biosynthesis. In terms of biological role, master enzyme that delivers sulfur to a number of partners involved in Fe-S cluster assembly, tRNA modification or cofactor biosynthesis. Catalyzes the removal of elemental sulfur atoms from cysteine to produce alanine. Functions as a sulfur delivery protein for Fe-S cluster synthesis onto IscU, an Fe-S scaffold assembly protein, as well as other S acceptor proteins. In Haemophilus ducreyi (strain 35000HP / ATCC 700724), this protein is Cysteine desulfurase IscS.